A 396-amino-acid polypeptide reads, in one-letter code: Putative F-box protein At4g22660 (396 aa).

Residues 7 to 58 form the F-box domain; the sequence is PNTWSDLPLDLLNLVFKRLSFANFRQAKSVCSSWYSASKQSVPKNQIPWLML.

This chain is Putative F-box protein At4g22660, found in Arabidopsis thaliana (Mouse-ear cress).